The sequence spans 689 residues: MNFENLLIELGTEELPPKSLRKLAESFLANFTEELSKADLAFSSAVWYAAPRRLAINVTELALAQADKVVEKRGPAVSSAFDAEGKPTKAAEGWARGNGITVEQAERLVTDKGEWLVHNAKVEGVETKSLIAAMAQRALDKLPIPKPMRWGNNKTQFIRPVHTATMLLGSELIEGELLGIKSARTVRGHRFMGLKQFELAHADHYLADLKEKGKVIADYESRKALIKADAEKAAAKIGGTADIEDSLLEEVASLVEWPVVLTASFEEKFLAVPSEALVYTMKGDQKYFPVFDDAGKLLPNFIFVTNIESKDPAQIISGNEKVVRPRLADAEFFFNTDKKHTLESRLPSLETVLFQQQLGTLKDKVNRISALAAFIAEQTGANAVDAARAGLLSKTDLMTNMVMEFTDTQGTMGMHYARLDGETEAVAVAMEEQYKPKFSGDTVPSAGVSCAVALADKLDTLVGIFGIGQAPKGAADPFALRRAAIGVLRIIVENKLPLDLVDLIAKAQALHGTNLSNANASDEVLEFLMARFRAWYQDKGIGVDVILAVLARRPTRPADFDSRINAVSHFRSLEASSALAAANKRVSNILAKVEGALPTTINASLLTEAAEQALAAKLNELQPLLAPLFANADYQQALTLLAGLRESVDQFFEDVMVMADDEALKNNRLALLNNLREQFLHVADISLLQ.

This sequence belongs to the class-II aminoacyl-tRNA synthetase family. Tetramer of two alpha and two beta subunits.

The protein resides in the cytoplasm. The enzyme catalyses tRNA(Gly) + glycine + ATP = glycyl-tRNA(Gly) + AMP + diphosphate. The sequence is that of Glycine--tRNA ligase beta subunit from Shewanella baltica (strain OS223).